Consider the following 89-residue polypeptide: Small ribosomal subunit protein uS15 (89 aa).

The protein belongs to the universal ribosomal protein uS15 family. As to quaternary structure, part of the 30S ribosomal subunit. Forms a bridge to the 50S subunit in the 70S ribosome, contacting the 23S rRNA.

In terms of biological role, one of the primary rRNA binding proteins, it binds directly to 16S rRNA where it helps nucleate assembly of the platform of the 30S subunit by binding and bridging several RNA helices of the 16S rRNA. Forms an intersubunit bridge (bridge B4) with the 23S rRNA of the 50S subunit in the ribosome. This is Small ribosomal subunit protein uS15 from Chloroherpeton thalassium (strain ATCC 35110 / GB-78).